The sequence spans 675 residues: Methionine--tRNA ligase (675 aa).

The 'HIGH' region motif lies at 15–25 (PYANGSIHLGH). 4 residues coordinate Zn(2+): Cys-146, Cys-149, Cys-159, and Cys-162. The 'KMSKS' region motif lies at 332 to 336 (KMSKS). Lys-335 contributes to the ATP binding site. A tRNA-binding domain is found at 573–675 (DFAKIDMRIA…SGAKPGHQVK (103 aa)).

The protein belongs to the class-I aminoacyl-tRNA synthetase family. MetG type 1 subfamily. Homodimer. Requires Zn(2+) as cofactor.

The protein resides in the cytoplasm. The catalysed reaction is tRNA(Met) + L-methionine + ATP = L-methionyl-tRNA(Met) + AMP + diphosphate. In terms of biological role, is required not only for elongation of protein synthesis but also for the initiation of all mRNA translation through initiator tRNA(fMet) aminoacylation. The protein is Methionine--tRNA ligase of Proteus mirabilis (strain HI4320).